Reading from the N-terminus, the 154-residue chain is Aspartate carbamoyltransferase regulatory chain (154 aa).

The Zn(2+) site is built by cysteine 109, cysteine 114, cysteine 138, and cysteine 141.

It belongs to the PyrI family. Contains catalytic and regulatory chains. It depends on Zn(2+) as a cofactor.

In terms of biological role, involved in allosteric regulation of aspartate carbamoyltransferase. The sequence is that of Aspartate carbamoyltransferase regulatory chain from Aeromonas hydrophila subsp. hydrophila (strain ATCC 7966 / DSM 30187 / BCRC 13018 / CCUG 14551 / JCM 1027 / KCTC 2358 / NCIMB 9240 / NCTC 8049).